A 311-amino-acid chain; its full sequence is Putative dihydroorotate dehydrogenase A (fumarate) (311 aa).

Substrate is bound by residues K45, 69–73, and N128; that span reads NSMGL. Residue 45–46 coordinates FMN; it reads KT. N128 provides a ligand contact to FMN. The active-site Nucleophile is C131. Residues K165 and V193 each contribute to the FMN site. 194–195 contributes to the substrate binding site; sequence NS. FMN is bound by residues G220, 248 to 249, and 270 to 271; these read GG and GT.

It belongs to the dihydroorotate dehydrogenase family. Type 1 subfamily. In terms of assembly, homodimer. The cofactor is FMN.

The protein resides in the cytoplasm. The enzyme catalyses (S)-dihydroorotate + fumarate = orotate + succinate. It participates in pyrimidine metabolism; UMP biosynthesis via de novo pathway. In terms of biological role, catalyzes the conversion of dihydroorotate to orotate with fumarate as the electron acceptor. This Streptococcus pyogenes serotype M1 protein is Putative dihydroorotate dehydrogenase A (fumarate) (pyrD).